The sequence spans 1369 residues: Neurofascin (1369 aa).

The signal sequence occupies residues 1–25 (MVLHSHQLTYAGIAFALCLHHLISA). The Extracellular portion of the chain corresponds to 26–1235 (IEVPLDSNIQ…NHVDIATQGW (1210 aa)). 2 consecutive Ig-like C2-type domains span residues 42–138 (PTIT…LQVS) and 144–231 (PKEK…NPYT). 2 cysteine pairs are disulfide-bonded: Cys64-Cys119 and Cys163-Cys214. Asn241, Asn247, and Asn323 each carry an N-linked (GlcNAc...) asparagine glycan. Ig-like C2-type domains lie at 262-350 (PSFM…ISVR), 355-442 (PYWL…AFVS), 448-535 (PRIL…VRLE), and 539-626 (PTRI…AYLT). Cystine bridges form between Cys286/Cys334 and Cys376/Cys426. 3 N-linked (GlcNAc...) asparagine glycosylation sites follow: Asn427, Asn464, and Asn501. 2 disulfides stabilise this stretch: Cys470-Cys519 and Cys561-Cys610. Fibronectin type-III domains lie at 645–740 (RPRD…TSGA), 745–838 (NPTG…SGED), 843–945 (APTD…TPEG), and 949–1057 (SPRY…TPAS). The N-linked (GlcNAc...) asparagine glycan is linked to Asn692. Polar residues predominate over residues 730–739 (MPSERYQTSG). A disordered region spans residues 730–753 (MPSERYQTSGARPEINPTGVQGAG). Residues Asn767, Asn793, Asn853, Asn994, and Asn1009 are each glycosylated (N-linked (GlcNAc...) asparagine). Positions 1078–1097 (TTATPTTETPPTEIPTTAIP) are disordered. N-linked (GlcNAc...) asparagine glycans are attached at residues Asn1133, Asn1150, Asn1156, and Asn1171. Positions 1133–1222 (NGSSIWDIRA…SYITFTTSSA (90 aa)) constitute a Fibronectin type-III 5 domain. A helical membrane pass occupies residues 1236–1256 (FIGLMCAIALLVLILLIVCFI). Topologically, residues 1257–1369 (KRSRGGKYPV…SPVNAIYSLA (113 aa)) are cytoplasmic. Basic and acidic residues-rich tracts occupy residues 1266–1282 (VRDN…KNVE) and 1289–1298 (RSLESDEDNK). A disordered region spans residues 1266–1369 (VRDNKDEHLN…SPVNAIYSLA (104 aa)). Residues 1300–1313 (LPNSQTSLDGTIKQ) show a composition bias toward polar residues.

It belongs to the immunoglobulin superfamily. L1/neurofascin/NgCAM family. In terms of processing, N-glycosylated and O-glycosylated. May be proteolytically cleaved at Arg-636.

The protein resides in the cell membrane. In terms of biological role, cell adhesion, ankyrin-binding protein which may be involved in neurite extension, axonal guidance, synaptogenesis, myelination and neuron-glial cell interactions. The sequence is that of Neurofascin (NFASC) from Gallus gallus (Chicken).